Consider the following 148-residue polypeptide: uncharacterized protein (148 aa).

The first 18 residues, 1–18 (MKIILTVLAGVGLLSAGG), serve as a signal peptide directing secretion. Cysteine 19 carries N-palmitoyl cysteine lipidation. Cysteine 19 carries the S-diacylglycerol cysteine lipid modification.

It localises to the cell membrane. This is an uncharacterized protein from Bacillus subtilis (strain 168).